The sequence spans 534 residues: Replication factor C large subunit (534 aa).

An ATP-binding site is contributed by 45–52 (GPPGIGKT). Residues 444–463 (KNKKEIKVKTKKDTVEDSSK) show a composition bias toward basic and acidic residues. The interval 444–534 (KNKKEIKVKT…KSRQTTLFDF (91 aa)) is disordered. Residues 488-510 (SSNSTTKNKTESPKNSSKTSSKT) show a composition bias toward low complexity. A compositionally biased stretch (basic residues) spans 517–527 (TSKKNNKKKSR).

It belongs to the activator 1 small subunits family. RfcL subfamily. Heteromultimer composed of small subunits (RfcS) and large subunits (RfcL).

Functionally, part of the RFC clamp loader complex which loads the PCNA sliding clamp onto DNA. The protein is Replication factor C large subunit of Methanosphaera stadtmanae (strain ATCC 43021 / DSM 3091 / JCM 11832 / MCB-3).